Here is a 72-residue protein sequence, read N- to C-terminus: Small ribosomal subunit protein bS18 (72 aa).

It belongs to the bacterial ribosomal protein bS18 family. As to quaternary structure, part of the 30S ribosomal subunit. Forms a tight heterodimer with protein bS6.

Binds as a heterodimer with protein bS6 to the central domain of the 16S rRNA, where it helps stabilize the platform of the 30S subunit. In Aquifex aeolicus (strain VF5), this protein is Small ribosomal subunit protein bS18.